The sequence spans 113 residues: uncharacterized protein (113 aa).

The tract at residues 31 to 113 is disordered; the sequence is SNNNNNNNNN…YSPTKFNLQY (83 aa). Positions 32-98 are enriched in low complexity; the sequence is NNNNNNNNNN…NNNNNNNNNN (67 aa). A compositionally biased stretch (polar residues) spans 99–113; it reads SSSFEYSPTKFNLQY.

This is an uncharacterized protein from Dictyostelium discoideum (Social amoeba).